The primary structure comprises 429 residues: Ribosomal RNA small subunit methyltransferase B (429 aa).

Residues C254–K260, D277, D303, and D322 contribute to the S-adenosyl-L-methionine site. The active-site Nucleophile is C375. A disordered region spans residues A397–D419. Residues E400 to L412 show a composition bias toward polar residues.

It belongs to the class I-like SAM-binding methyltransferase superfamily. RsmB/NOP family.

The protein resides in the cytoplasm. The catalysed reaction is cytidine(967) in 16S rRNA + S-adenosyl-L-methionine = 5-methylcytidine(967) in 16S rRNA + S-adenosyl-L-homocysteine + H(+). Its function is as follows. Specifically methylates the cytosine at position 967 (m5C967) of 16S rRNA. The protein is Ribosomal RNA small subunit methyltransferase B of Salmonella dublin (strain CT_02021853).